The sequence spans 713 residues: Oligopeptidase PhomG (713 aa).

His-461 lines the Zn(2+) pocket. The active site involves Glu-462. Zn(2+) is bound by residues His-465 and His-468.

Belongs to the peptidase M3 family. In terms of assembly, monomer. Zn(2+) is required as a cofactor.

It participates in mycotoxin biosynthesis. In terms of biological role, oligopeptidase; part of the gene cluster that mediates the biosynthesis of the phomopsins, a group of hexapeptide mycotoxins which infects lupins and causes lupinosis disease in livestock. Within the pathway, phomG and phomG' are probably involved in the processing of the phomA and phomA' precursors. The pathway starts with the processing of the precursor phomA by several endopeptidases including kexin proteases as well as the cluster-specific S41 family peptidase phomP1 and the oligopeptidase phomG to produce 10 identical copies of the hexapeptide Tyr-Val-Ile-Pro-Ile-Asp. After being excised from the precursor peptide, the core peptides are cyclized and modified post-translationally by enzymes encoded within the gene cluster. The timing and order of proteolysis of the phomA precursor and PTMs are still unknown. Two tyrosinase-like enzymes, phomQ1 and phomQ2, catalyze the chlorination and hydroxylation of Tyr, respectively. PhomYb, is proposed to be involved in the construction of the macrocyclic structure. The other 4 ustYa family proteins may be involved in PTMs that generate the unique structure of phomopsin A. PhomYa is required for the hydroxylation of C-beta of Tyr. PhomYc, phomYd, and phomYe are responsible for the biosynthesis of 2,3-dehydroisoleucine (dIle), 2,3-dehydroaspartic acid (dAsp), and 3,4-dehydroproline (dPro), respectively. While dIle formation by phomYc is indispensable for the installation of dAsp by phomYd, the order of the other PTMs have not been elucidated yet. Most of the biosynthetic enzymes likely have broad substrate specificity, and thus, there might be a metabolic grid from a precursor to phomopsin A. The enzyme(s) responsible for the biosynthesis of 3,4-dehydrovaline (dVal) have also not been identified yet. Finally, phomM acts as an S-adenosylmethionine-dependent alpha-N-methyltransferase that catalyzes two successive N-methylation reactions, converting N-desmethyl-phomopsin A to phomopsin A and phomopsin A further to an N,N-dimethylated congener called phomopsin E. The protein is Oligopeptidase PhomG of Diaporthe leptostromiformis (Lupinosis disease fungus).